The chain runs to 117 residues: Ig heavy chain V-A2 region K-25 (117 aa).

A Pyrrolidone carboxylic acid modification is found at Gln-1. Residues 1 to 106 (QSVKESEGGL…GLSYLKSSVD (106 aa)) enclose the Ig-like domain. An intrachain disulfide couples Cys-21 to Cys-91.

This is Ig heavy chain V-A2 region K-25 from Oryctolagus cuniculus (Rabbit).